The following is a 309-amino-acid chain: Ferrochelatase (309 aa).

Residues histidine 185 and glutamate 262 each contribute to the Fe cation site.

The protein belongs to the ferrochelatase family.

It is found in the cytoplasm. The enzyme catalyses heme b + 2 H(+) = protoporphyrin IX + Fe(2+). The protein operates within porphyrin-containing compound metabolism; protoheme biosynthesis; protoheme from protoporphyrin-IX: step 1/1. Catalyzes the ferrous insertion into protoporphyrin IX. This is Ferrochelatase from Campylobacter jejuni subsp. jejuni serotype O:23/36 (strain 81-176).